Consider the following 365-residue polypeptide: D-alanine--D-alanine ligase (365 aa).

The 211-residue stretch at 135 to 345 (KLLLKSFNIP…YESLVDNLVS (211 aa)) folds into the ATP-grasp domain. Residue 168–223 (KQSLNYPVIVKPAMLGSSIGISIAYNDTQIEKCIEEAFEYDLTVVVEKFMKVREIE) participates in ATP binding. Residues D298, E312, and N314 each contribute to the Mg(2+) site.

Belongs to the D-alanine--D-alanine ligase family. It depends on Mg(2+) as a cofactor. Mn(2+) serves as cofactor.

It is found in the cytoplasm. The enzyme catalyses 2 D-alanine + ATP = D-alanyl-D-alanine + ADP + phosphate + H(+). It participates in cell wall biogenesis; peptidoglycan biosynthesis. In terms of biological role, cell wall formation. This chain is D-alanine--D-alanine ligase, found in Borrelia hermsii (strain HS1 / DAH).